The primary structure comprises 496 residues: Lysine--tRNA ligase (496 aa).

Glu-409 and Glu-416 together coordinate Mg(2+).

Belongs to the class-II aminoacyl-tRNA synthetase family. As to quaternary structure, homodimer. Mg(2+) serves as cofactor.

Its subcellular location is the cytoplasm. The catalysed reaction is tRNA(Lys) + L-lysine + ATP = L-lysyl-tRNA(Lys) + AMP + diphosphate. This Streptococcus mutans serotype c (strain ATCC 700610 / UA159) protein is Lysine--tRNA ligase.